We begin with the raw amino-acid sequence, 153 residues long: Small ribosomal subunit protein uS12m (153 aa).

A mitochondrion-targeting transit peptide spans 1–20 (MLSRFMSNTWCTPLRQAQRL).

Belongs to the universal ribosomal protein uS12 family. Component of the mitochondrial small ribosomal subunit (mt-SSU). Mature yeast 74S mitochondrial ribosomes consist of a small (37S) and a large (54S) subunit. The 37S small subunit contains a 15S ribosomal RNA (15S mt-rRNA) and 34 different proteins. The 54S large subunit contains a 21S rRNA (21S mt-rRNA) and 46 different proteins. uS12m forms part of the decoding center of the mt-SSU.

The protein localises to the mitochondrion. Functionally, component of the mitochondrial ribosome (mitoribosome), a dedicated translation machinery responsible for the synthesis of mitochondrial genome-encoded proteins, including at least some of the essential transmembrane subunits of the mitochondrial respiratory chain. The mitoribosomes are attached to the mitochondrial inner membrane and translation products are cotranslationally integrated into the membrane. uS12m is required for respiratory growth. In Saccharomyces cerevisiae (strain ATCC 204508 / S288c) (Baker's yeast), this protein is Small ribosomal subunit protein uS12m (MRPS12).